The primary structure comprises 38 residues: Beta-defensin 1 (38 aa).

Disulfide bonds link C5-C34, C12-C27, and C17-C35.

This sequence belongs to the beta-defensin family. Monomer. Homodimer. In terms of tissue distribution, neutrophilic granules.

The protein localises to the secreted. Its subcellular location is the membrane. In terms of biological role, has bactericidal activity. Active against E.coli ML35 but not against S.aureus 502A. May act as a ligand for C-C chemokine receptor CCR6. Positively regulates the sperm motility and bactericidal activity in a CCR6-dependent manner. Binds to CCR6 and triggers Ca2+ mobilization in the sperm which is important for its motility. This chain is Beta-defensin 1 (DEFB1), found in Bos taurus (Bovine).